The sequence spans 231 residues: MKKPIVCCDFDGTITKNDNIIRIMKHFAPSEWTKLKDDVLTKEITIQEGVGQMFQLLKSDQKEAIQSFILEDTEIREGFKQFVDHVKKADIPFYVLSGGMDFFVYPILEGIVEREDIYCNHASFHEEHIQIEWPHACDSQCQNGCGCCKPSIIRELTRENDFIIMIGDSVTDVEAAKHADLTFARDYLLNECKELGLVHKEYETFIDLKAQFDQIKEVKEWQTKRTSAGRS.

Belongs to the HAD-like hydrolase superfamily. MtnX family.

The enzyme catalyses 2-hydroxy-5-methylsulfanyl-3-oxopent-1-enyl phosphate + H2O = 1,2-dihydroxy-5-(methylsulfanyl)pent-1-en-3-one + phosphate. It participates in amino-acid biosynthesis; L-methionine biosynthesis via salvage pathway; L-methionine from S-methyl-5-thio-alpha-D-ribose 1-phosphate: step 4/6. In terms of biological role, dephosphorylates 2-hydroxy-3-keto-5-methylthiopentenyl-1-phosphate (HK-MTPenyl-1-P) yielding 1,2-dihydroxy-3-keto-5-methylthiopentene (DHK-MTPene). The protein is 2-hydroxy-3-keto-5-methylthiopentenyl-1-phosphate phosphatase of Bacillus pumilus (strain SAFR-032).